Consider the following 490-residue polypeptide: UDP-N-acetylmuramate--L-alanine ligase (490 aa).

126 to 132 (GTHGKTT) provides a ligand contact to ATP.

This sequence belongs to the MurCDEF family.

It localises to the cytoplasm. It carries out the reaction UDP-N-acetyl-alpha-D-muramate + L-alanine + ATP = UDP-N-acetyl-alpha-D-muramoyl-L-alanine + ADP + phosphate + H(+). It functions in the pathway cell wall biogenesis; peptidoglycan biosynthesis. Its function is as follows. Cell wall formation. The chain is UDP-N-acetylmuramate--L-alanine ligase from Baumannia cicadellinicola subsp. Homalodisca coagulata.